The following is a 108-amino-acid chain: Small ribosomal subunit protein uS17 (108 aa).

The disordered stretch occupies residues 1–26; that stretch reads MREKMAEATETQASETSTRGRPKTRV. Positions 8–17 are enriched in low complexity; that stretch reads ATETQASETS.

This sequence belongs to the universal ribosomal protein uS17 family. Part of the 30S ribosomal subunit.

One of the primary rRNA binding proteins, it binds specifically to the 5'-end of 16S ribosomal RNA. The chain is Small ribosomal subunit protein uS17 from Myxococcus xanthus (strain DK1622).